A 53-amino-acid chain; its full sequence is GKVEFQGKKTKFDSDDERNENGAAGPVKRAREETDKEEPASKQQKTENGAGDQ.

Residues 1-13 (GKVEFQGKKTKFD) show a composition bias toward basic and acidic residues. Residues 1 to 53 (GKVEFQGKKTKFDSDDERNENGAAGPVKRAREETDKEEPASKQQKTENGAGDQ) form a disordered region. Residue Lys-8 is modified to N6-acetyllysine. Residue Thr-10 is modified to Phosphothreonine. Position 14 is a phosphoserine (Ser-14). The span at 29–40 (RAREETDKEEPA) shows a compositional bias: basic and acidic residues.

As to quaternary structure, interacts with DDX15. May interact with RUFY1. In terms of processing, phosphorylated.

The protein localises to the nucleus. Functionally, binds to the 3' poly(U) terminus of nascent RNA polymerase III transcripts, protecting them from exonuclease digestion and facilitating their folding and maturation. This chain is Lupus La protein homolog (SSB), found in Oryctolagus cuniculus (Rabbit).